Consider the following 185-residue polypeptide: Ribosome-recycling factor (185 aa).

Belongs to the RRF family.

It is found in the cytoplasm. Its function is as follows. Responsible for the release of ribosomes from messenger RNA at the termination of protein biosynthesis. May increase the efficiency of translation by recycling ribosomes from one round of translation to another. The protein is Ribosome-recycling factor of Alkalilimnicola ehrlichii (strain ATCC BAA-1101 / DSM 17681 / MLHE-1).